An 84-amino-acid polypeptide reads, in one-letter code: Putative regulatory protein Hore_09800 (84 aa).

The protein belongs to the RemA family.

The protein is Putative regulatory protein Hore_09800 of Halothermothrix orenii (strain H 168 / OCM 544 / DSM 9562).